We begin with the raw amino-acid sequence, 151 residues long: Arginine repressor (151 aa).

Belongs to the ArgR family.

It localises to the cytoplasm. It functions in the pathway amino-acid biosynthesis; L-arginine biosynthesis [regulation]. Its function is as follows. Regulates arginine biosynthesis genes. This chain is Arginine repressor, found in Pelotomaculum thermopropionicum (strain DSM 13744 / JCM 10971 / SI).